We begin with the raw amino-acid sequence, 65 residues long: uncharacterized protein (65 aa).

Residues 1–22 (MEKETPQQETKQSTNKESGFFD) are disordered. The span at 7–17 (QQETKQSTNKE) shows a compositional bias: polar residues. A coiled-coil region spans residues 22–65 (DEIIKRTNQLLEKEKELHEKYNKEITSQQDQIDQLKKKINQLKY).

This is an uncharacterized protein from Dictyostelium discoideum (Social amoeba).